Here is a 406-residue protein sequence, read N- to C-terminus: F-box/WD repeat-containing protein mec-15 (406 aa).

The F-box domain maps to 6–53 (PTELISLPSELLCHLFTYLPQRQLITEIPLVCRRFNTILNDDKFWSRR). WD repeat units lie at residues 101 to 142 (GHSA…NGED), 156 to 195 (AHSG…ALQN), 242 to 279 (LHKR…KPVL), 281 to 320 (EYSP…VLQT), and 365 to 406 (SHEL…DQEN).

May interact with the SCF ubiquitin ligase complex component skr-1. Expressed in several neurons in the head, tail and ventral cord, but absent in touch receptor neurons in adults. Expressed in GABAergic and cholinergic motor neurons.

The protein resides in the perikaryon. Functionally, plays a role in mechanosensory transduction (touch sensitivity), touch receptor neuron development and synapse formation. Regulates expression of the protein snb-1 and the distribution of synaptic vesicles at synapses to promote synaptic transmission at the neuromuscular junctions of GABAergic motor neurons. In Caenorhabditis elegans, this protein is F-box/WD repeat-containing protein mec-15.